A 539-amino-acid polypeptide reads, in one-letter code: Beta-agarase A (539 aa).

The signal sequence occupies residues 1–19 (MKKNYLLLYFIFLLCGSIA). The 269-residue stretch at 21–289 (QDWNGIPVPA…WIRVYKPVAV (269 aa)) folds into the GH16 domain. Residues W73, 82–92 (NAPQAWTNGSQ), 96–98 (QAQ), and E144 contribute to the substrate site. E147 (nucleophile) is an active-site residue. The Proton donor role is filled by E152. Substrate contacts are provided by R176 and D271. The segment at 332 to 353 (WANTNDIGSRDRGASNGRNNIN) is disordered.

It belongs to the glycosyl hydrolase 16 family. In terms of assembly, monomer. Post-translationally, proteolytically cleaved into mature beta-agarase A catalytic chain (AgaAc).

The protein localises to the secreted. It carries out the reaction Hydrolysis of (1-&gt;4)-beta-D-galactosidic linkages in agarose, giving the tetramer as the predominant product.. Its function is as follows. Cleaves the beta-1,4-linkages between beta-D-galactose and alpha-L-3,6-anhydro-galactose residues in agarose. Cleaves agarose in a random manner with retention of the anomeric-bond configuration, producing beta-anomers that give rise progressively to alpha-anomers when mutarotation takes place. The chain is Beta-agarase A (agaA) from Zobellia galactanivorans (strain DSM 12802 / CCUG 47099 / CIP 106680 / NCIMB 13871 / Dsij).